We begin with the raw amino-acid sequence, 410 residues long: Ribulose bisphosphate carboxylase large chain (410 aa).

Substrate is bound by residues asparagine 100 and threonine 150. Lysine 152 (proton acceptor) is an active-site residue. Lysine 154 serves as a coordination point for substrate. The Mg(2+) site is built by lysine 178, aspartate 180, and glutamate 181. N6-carboxylysine is present on lysine 178. Histidine 271 acts as the Proton acceptor in catalysis. Substrate is bound by residues arginine 272, histidine 304, and serine 356.

Belongs to the RuBisCO large chain family. Type I subfamily. Heterohexadecamer of 8 large chains and 8 small chains; disulfide-linked. The disulfide link is formed within the large subunit homodimers. The cofactor is Mg(2+). Post-translationally, the disulfide bond which can form in the large chain dimeric partners within the hexadecamer appears to be associated with oxidative stress and protein turnover.

The protein resides in the plastid. The protein localises to the chloroplast. It carries out the reaction 2 (2R)-3-phosphoglycerate + 2 H(+) = D-ribulose 1,5-bisphosphate + CO2 + H2O. It catalyses the reaction D-ribulose 1,5-bisphosphate + O2 = 2-phosphoglycolate + (2R)-3-phosphoglycerate + 2 H(+). Functionally, ruBisCO catalyzes two reactions: the carboxylation of D-ribulose 1,5-bisphosphate, the primary event in carbon dioxide fixation, as well as the oxidative fragmentation of the pentose substrate in the photorespiration process. Both reactions occur simultaneously and in competition at the same active site. This is Ribulose bisphosphate carboxylase large chain (rbcL) from Gleichenia japonica (Urajiro).